The following is a 347-amino-acid chain: Phenylalanine--tRNA ligase alpha subunit (347 aa).

Glu265 contributes to the Mg(2+) binding site.

Belongs to the class-II aminoacyl-tRNA synthetase family. Phe-tRNA synthetase alpha subunit type 1 subfamily. Tetramer of two alpha and two beta subunits. Mg(2+) is required as a cofactor.

The protein localises to the cytoplasm. It catalyses the reaction tRNA(Phe) + L-phenylalanine + ATP = L-phenylalanyl-tRNA(Phe) + AMP + diphosphate + H(+). This chain is Phenylalanine--tRNA ligase alpha subunit, found in Wolbachia pipientis wMel.